A 249-amino-acid chain; its full sequence is Probable transcriptional regulatory protein Strop_1792 (249 aa).

This sequence belongs to the TACO1 family.

The protein localises to the cytoplasm. This Salinispora tropica (strain ATCC BAA-916 / DSM 44818 / JCM 13857 / NBRC 105044 / CNB-440) protein is Probable transcriptional regulatory protein Strop_1792.